Here is a 193-residue protein sequence, read N- to C-terminus: Inner membrane-spanning protein YciB (193 aa).

6 helical membrane-spanning segments follow: residues 5–25 (TLDAIKPFLDWIPLIVFFYIY), 36–56 (IIAATTGLLIATLIVYGLMFV), 67–87 (WLVVVLTVVFGGLTMAFQDDF), 93–113 (APIINAVFAFGLAMSPLFLGG), 138–158 (VWVGFFTLMAVLQALFAFVWV), and 164–184 (FTAFGDMIVMVVFMVAQFWFL).

It belongs to the YciB family.

The protein resides in the cell inner membrane. Functionally, plays a role in cell envelope biogenesis, maintenance of cell envelope integrity and membrane homeostasis. The polypeptide is Inner membrane-spanning protein YciB (Vitreoscilla sp. (strain C1)).